A 594-amino-acid chain; its full sequence is UvrABC system protein C (594 aa).

The GIY-YIG domain maps to Asp-14–Ile-91. A UVR domain is found at Lys-196–Ile-231.

The protein belongs to the UvrC family. Interacts with UvrB in an incision complex.

The protein resides in the cytoplasm. In terms of biological role, the UvrABC repair system catalyzes the recognition and processing of DNA lesions. UvrC both incises the 5' and 3' sides of the lesion. The N-terminal half is responsible for the 3' incision and the C-terminal half is responsible for the 5' incision. The protein is UvrABC system protein C of Bacillus thuringiensis (strain Al Hakam).